The chain runs to 5161 residues: Nonribosomal peptide synthetase TES (5161 aa).

The segment at 37–436 is adenylation 1; sequence EEQAIARPNA…GRKDSQTKVR (400 aa). The Carrier 1 domain occupies 569–645; that stretch reads QPETEKEQIL…KLTSAAIPSV (77 aa). Ser-606 is subject to O-(pantetheine 4'-phosphoryl)serine. A condensation 1 region spans residues 659–1098; that stretch reads GHVAQSFAQG…LLCDVELSKL (440 aa). The segment at 1122–1522 is adenylation 2; sequence RQQTSLCPSR…GRMDGQVKIR (401 aa). Residues 1630–1742 form a methyltransferase (M) domain 1 region; it reads MNEWLDDTID…YLFKTTQQLL (113 aa). In terms of domain architecture, Carrier 2 spans 2068-2141; it reads TRAESKIQQL…QLAAVAQEHV (74 aa). Position 2102 is an O-(pantetheine 4'-phosphoryl)serine (Ser-2102). The tract at residues 2179–2593 is condensation 2; it reads EDIYPCSPLQ…MLTQDDEQQL (415 aa). The adenylation 3 stretch occupies residues 2614 to 3010; it reads DQAKSRPEAD…GRKDGQVKVR (397 aa). The 77-residue stretch at 3139 to 3215 folds into the Carrier 3 domain; that stretch reads KPETKHEMAL…RLANRLVDPP (77 aa). An O-(pantetheine 4'-phosphoryl)serine modification is found at Ser-3176. The condensation 3 stretch occupies residues 3232 to 3668; sequence LQSFAQGRLW…VVPLMTVEAH (437 aa). The adenylation 4 stretch occupies residues 3694-4098; it reads FRQQAAMQPS…GRIDGQVKIR (405 aa). The tract at residues 4203-4329 is methyltransferase (M) domain 2; the sequence is EMKEWLEETI…KVDGVKTLFF (127 aa). In terms of domain architecture, Carrier 4 spans 4643-4725; sequence RELSTAELKV…QFSQHEGEQK (83 aa). Ser-4680 is subject to O-(pantetheine 4'-phosphoryl)serine. The segment at 4785 to 5093 is condensation 4; it reads FFLNLGTRVD…HQNLNEHPEF (309 aa).

It belongs to the NRP synthetase family.

The protein operates within phytotoxin biosynthesis. Its function is as follows. Nonribosomal peptide synthetase; part of the gene cluster that mediates the biosynthesis of the phytotoxin tentoxin, an inhibitor the F1-ATPase activity of chloroplasts, resulting in chlorosis in sensitive plants. Tentoxin is a cyclic tetrapeptide that consists of four amino acid residues: glycine (Gly), alanine (Ala), leucine (Leu), and dehydrophenylalanine (DPhe). In addition, both the Ala and DPhe residues are N-methylated. The nonribosomal peptide synthetase TES assembles tentoxin from the four substrate amino acids. The adenylation domains of each of the 4 modules are responsible for the activation of Gly, Ala, Leu and DPhe, respectively. In addition, the N-methyltransferase domains in the second and fourth modules of TES could be responsible for N-methylation of Ala and DPhe residues. Finally, the condensation domain located in the termination module probably catalyzes the formation of the intramolecular macrocyclization and then the release of tentoxin. The cytochrome P450 monooxygenase TES1 is predicted to be involved in the formation of DPhe. In Alternaria alternata (Alternaria rot fungus), this protein is Nonribosomal peptide synthetase TES.